A 141-amino-acid chain; its full sequence is Hemoglobin subunit alpha (141 aa).

Positions Val-1–Arg-141 constitute a Globin domain. Residue Ser-3 is modified to Phosphoserine. N6-succinyllysine occurs at positions 7 and 11. Residue Lys-16 is modified to N6-acetyllysine; alternate. Lys-16 is modified (N6-succinyllysine; alternate). The residue at position 24 (Tyr-24) is a Phosphotyrosine. Ser-35 is modified (phosphoserine). An N6-succinyllysine modification is found at Lys-40. At Ser-49 the chain carries Phosphoserine. Residue His-58 coordinates O2. His-87 serves as a coordination point for heme b. Position 102 is a phosphoserine (Ser-102). Thr-108 is subject to Phosphothreonine. Residue Ser-124 is modified to Phosphoserine. 2 positions are modified to phosphothreonine: Thr-134 and Thr-137. Position 138 is a phosphoserine (Ser-138).

It belongs to the globin family. In terms of assembly, heterotetramer of two alpha chains and two beta chains. Red blood cells.

Its function is as follows. Involved in oxygen transport from the lung to the various peripheral tissues. Functionally, hemopressin acts as an antagonist peptide of the cannabinoid receptor CNR1. Hemopressin-binding efficiently blocks cannabinoid receptor CNR1 and subsequent signaling. The sequence is that of Hemoglobin subunit alpha (HBA) from Felis catus (Cat).